A 185-amino-acid chain; its full sequence is Ribosome-recycling factor (185 aa).

The tract at residues 137–166 is disordered; the sequence is DGLKKAEKDGDIGQDESRGQSEKVQKMTDD.

It belongs to the RRF family.

The protein localises to the cytoplasm. Responsible for the release of ribosomes from messenger RNA at the termination of protein biosynthesis. May increase the efficiency of translation by recycling ribosomes from one round of translation to another. In Agrobacterium fabrum (strain C58 / ATCC 33970) (Agrobacterium tumefaciens (strain C58)), this protein is Ribosome-recycling factor.